The primary structure comprises 200 residues: Recombination protein RecR (200 aa).

The C4-type zinc finger occupies 59–74 (CEICGNIDTRSPCTVC). The region spanning 82–177 (SIIVVVADVA…KVTRLAHGVP (96 aa)) is the Toprim domain.

Belongs to the RecR family.

Functionally, may play a role in DNA repair. It seems to be involved in an RecBC-independent recombinational process of DNA repair. It may act with RecF and RecO. This chain is Recombination protein RecR, found in Nitrobacter hamburgensis (strain DSM 10229 / NCIMB 13809 / X14).